The following is a 459-amino-acid chain: tRNA modification GTPase MnmE (459 aa).

(6S)-5-formyl-5,6,7,8-tetrahydrofolate is bound by residues R30, E93, and K132. In terms of domain architecture, TrmE-type G spans 226–381 (GVTMAIVGKP…LEEKILESVK (156 aa)). A K(+)-binding site is contributed by N236. GTP-binding positions include 236-241 (NVGKST), 255-261 (TDIPGTT), and 280-283 (DTAG). Mg(2+) is bound at residue S240. The K(+) site is built by T255, I257, and T260. Mg(2+) is bound at residue T261. (6S)-5-formyl-5,6,7,8-tetrahydrofolate is bound at residue K459.

It belongs to the TRAFAC class TrmE-Era-EngA-EngB-Septin-like GTPase superfamily. TrmE GTPase family. As to quaternary structure, homodimer. Heterotetramer of two MnmE and two MnmG subunits. Requires K(+) as cofactor.

It localises to the cytoplasm. Its function is as follows. Exhibits a very high intrinsic GTPase hydrolysis rate. Involved in the addition of a carboxymethylaminomethyl (cmnm) group at the wobble position (U34) of certain tRNAs, forming tRNA-cmnm(5)s(2)U34. The sequence is that of tRNA modification GTPase MnmE from Fervidobacterium nodosum (strain ATCC 35602 / DSM 5306 / Rt17-B1).